The sequence spans 110 residues: Flagellar hook-basal body complex protein FliE (110 aa).

Belongs to the FliE family.

Its subcellular location is the bacterial flagellum basal body. This Bordetella petrii (strain ATCC BAA-461 / DSM 12804 / CCUG 43448) protein is Flagellar hook-basal body complex protein FliE.